The sequence spans 83 residues: Bublin coiled-coil protein (83 aa).

A disordered region spans residues methionine 1–glycine 24. Residues glutamate 25–leucine 74 adopt a coiled-coil conformation. Phosphoserine is present on serine 82.

Belongs to the UPF0184 (EST00098) family.

The protein resides in the cell junction. Its subcellular location is the cytoplasm. It localises to the cytoskeleton. Functionally, essential for intermediate filament organization in intestinal cells, interacts with intermediate filament and regulates intestinal lumen morphology. The chain is Bublin coiled-coil protein from Homo sapiens (Human).